The primary structure comprises 626 residues: UvrABC system protein C (626 aa).

One can recognise a GIY-YIG domain in the interval 20 to 97 (ECSGVYKMLD…IKKFQPKFNI (78 aa)). A UVR domain is found at 207-242 (RELQENLSKKMQELSSQMRFEEAAEIRDRIKALSYV).

Belongs to the UvrC family. As to quaternary structure, interacts with UvrB in an incision complex.

It localises to the cytoplasm. Its function is as follows. The UvrABC repair system catalyzes the recognition and processing of DNA lesions. UvrC both incises the 5' and 3' sides of the lesion. The N-terminal half is responsible for the 3' incision and the C-terminal half is responsible for the 5' incision. In Rickettsia typhi (strain ATCC VR-144 / Wilmington), this protein is UvrABC system protein C.